The primary structure comprises 355 residues: Inositol-tetrakisphosphate 1-kinase 4 (355 aa).

Lys-65 contributes to the 1D-myo-inositol 1,3,4-trisphosphate binding site. ATP is bound by residues Arg-101 and Lys-146. The region spanning Val-107 to Arg-318 is the ATP-grasp domain. Residues His-157 and Lys-190 each coordinate 1D-myo-inositol 1,3,4-trisphosphate. ATP is bound by residues Gln-179–Lys-190 and Ser-205. A disordered region spans residues Phe-225–Pro-248. Over residues Pro-236–Thr-247 the composition is skewed to acidic residues. Asp-272, Asp-289, and Asn-291 together coordinate Mg(2+). Asn-291 is a 1D-myo-inositol 1,3,4-trisphosphate binding site.

It belongs to the ITPK1 family. In terms of assembly, monomer. Requires Mg(2+) as cofactor.

The enzyme catalyses 1D-myo-inositol 3,4,5,6-tetrakisphosphate + ATP = 1D-myo-inositol 1,3,4,5,6-pentakisphosphate + ADP + H(+). It catalyses the reaction 1D-myo-inositol 1,3,4-trisphosphate + ATP = 1D-myo-inositol 1,3,4,5-tetrakisphosphate + ADP + H(+). The catalysed reaction is 1D-myo-inositol 1,3,4-trisphosphate + ATP = 1D-myo-inositol 1,3,4,6-tetrakisphosphate + ADP + H(+). In terms of biological role, kinase that can phosphorylate various inositol polyphosphate such as Ins(3,4,5,6)P4 or Ins(1,3,4)P3 and participates in phytic acid biosynthesis in developing seeds. Phytic acid is the primary storage form of phosphorus in cereal grains and other plant seeds. This chain is Inositol-tetrakisphosphate 1-kinase 4 (ITPK4), found in Oryza sativa subsp. indica (Rice).